We begin with the raw amino-acid sequence, 197 residues long: UPF0314 protein R03235 (197 aa).

The next 2 membrane-spanning stretches (helical) occupy residues 16–36 (ALWLLACLGVLAIQVLVQHLM) and 152–172 (LPVAATVAIAIVLELFTGYMV).

It belongs to the UPF0314 family.

The protein resides in the cell membrane. The protein is UPF0314 protein R03235 of Rhizobium meliloti (strain 1021) (Ensifer meliloti).